Consider the following 314-residue polypeptide: Homoserine kinase (314 aa).

P95–S105 contacts ATP.

Belongs to the GHMP kinase family. Homoserine kinase subfamily.

The protein localises to the cytoplasm. It catalyses the reaction L-homoserine + ATP = O-phospho-L-homoserine + ADP + H(+). The protein operates within amino-acid biosynthesis; L-threonine biosynthesis; L-threonine from L-aspartate: step 4/5. Catalyzes the ATP-dependent phosphorylation of L-homoserine to L-homoserine phosphate. This Rhodococcus opacus (strain B4) protein is Homoserine kinase.